The primary structure comprises 707 residues: Polyribonucleotide nucleotidyltransferase (707 aa).

Positions 488 and 494 each coordinate Mg(2+). In terms of domain architecture, KH spans 555–615 (PIIKVTKIDP…ENVDNAIALI (61 aa)). The S1 motif domain occupies 625-692 (GEILEGKITR…DLGRLQFKRV (68 aa)).

This sequence belongs to the polyribonucleotide nucleotidyltransferase family. Requires Mg(2+) as cofactor.

It is found in the cytoplasm. The enzyme catalyses RNA(n+1) + phosphate = RNA(n) + a ribonucleoside 5'-diphosphate. Functionally, involved in mRNA degradation. Catalyzes the phosphorolysis of single-stranded polyribonucleotides processively in the 3'- to 5'-direction. The sequence is that of Polyribonucleotide nucleotidyltransferase from Thermotoga neapolitana (strain ATCC 49049 / DSM 4359 / NBRC 107923 / NS-E).